The sequence spans 434 residues: Serine hydroxymethyltransferase (434 aa).

(6S)-5,6,7,8-tetrahydrofolate is bound by residues leucine 128 and 132–134 (GHL). Lysine 237 carries the post-translational modification N6-(pyridoxal phosphate)lysine.

This sequence belongs to the SHMT family. Homodimer. Requires pyridoxal 5'-phosphate as cofactor.

It localises to the cytoplasm. The catalysed reaction is (6R)-5,10-methylene-5,6,7,8-tetrahydrofolate + glycine + H2O = (6S)-5,6,7,8-tetrahydrofolate + L-serine. The protein operates within one-carbon metabolism; tetrahydrofolate interconversion. It participates in amino-acid biosynthesis; glycine biosynthesis; glycine from L-serine: step 1/1. Catalyzes the reversible interconversion of serine and glycine with tetrahydrofolate (THF) serving as the one-carbon carrier. This reaction serves as the major source of one-carbon groups required for the biosynthesis of purines, thymidylate, methionine, and other important biomolecules. Also exhibits THF-independent aldolase activity toward beta-hydroxyamino acids, producing glycine and aldehydes, via a retro-aldol mechanism. The protein is Serine hydroxymethyltransferase of Corynebacterium glutamicum (strain R).